A 1082-amino-acid chain; its full sequence is MTHDNRQLLPQETKLVTPNKDTLSSRYLHVLIIDNTLSTIEFVYMAVKAVLTQVDTLNALEQRKNRPTNRILGLSTSVSKRYINIPKFSSSGASNSQGVKTLAAIRKFCLPDKNCFRNFLSFSTTLFKVPSSIDIYFLFFTASTVSTMAARALDLEFILSSLKNSTSPESLLAATAKIELLSLAADSVTHNRVIAFINRLTPKKYHFDLIRQYAVFYFLNSTTLTSENKLLSAELLYEELSQIPSSSSSGTELENLNNAEVLYVFDRILNSIKMLKNELSSPIGKLRAQPAANDPGTDKTIKYSKIQSIIQKINSFTHENSLLANCRAVVELIDDLYRKLYSWFLHVLTFEDIQFPGDTFLDRLLKMDYCFTYYPSSNRHLIDLFEKTLDNQTFTNLDKFFDTSGNSPELLYQKTFSLKIFSKNLTAQDNGLYIYPLLKTDLSILDFLGTENILFHRGLIYHILHQKTIPQERENDLNKINQFFATVIQQVIETKSSCLPASLSQLLDTIFHFNRIGLNMETCRTYIEILSNHMATPDTQPIINTFTINLTHIVFTAHVFFICMENFSPTFIFYNRKKLILEQQRAILIIERNDYSTLWKQISDHIECLFNVSLSESFFKEYTKGGNEDQKQFLYKNLFEKWGNVFFPFTYSVSTSNNSTAHHITTLELRDICKEVYQSDSPDAYESLLPYSTHPSFKTLFVKIYVIPMVSHITNLTFDKLQSDCRLLTLIHACKLLLPSQHLLLHYMAWLYAFSINVDHIDLGTFTVIKSVIFKIADHINVMTHTIYSPETNLLVSILLNAYTNYLQKYVNPWIKQTITANFSLIQTYITFTKQCASILATKCNINLDNLFIYITIGTDKIVTTSFCSFIATCRNLVRQHEEFEKSLQTIQISEITLTGMLRNIITSVSSSKELLTNEALQKFIDTVQRISQHVNETYHSISVNLEKCKTSNDILIESLKKIIYIVDVLSSNAILNTSLASRCLEAANLAVSNNSFTILEIKKDAVAVFKPFITQLFESMKPTTSLHKKLMSTQKLTTDHIPFLDTFDDRYNLVRHVERQLNWYAAHAEAAQQDLITPLKF.

An interaction with large tegument protein region spans residues 604–1082 (DHIECLFNVS…QQDLITPLKF (479 aa)).

The protein belongs to the herpesviridae inner tegument protein family. In terms of assembly, interacts (via C-terminus) with the large tegument protein/LTP (via N-terminus).

It localises to the virion tegument. The protein resides in the host cytoplasm. The protein localises to the host nucleus. Its subcellular location is the host Golgi apparatus. It is found in the host trans-Golgi network. Functionally, plays an essential role in cytoplasmic secondary envelopment during viral egress. Interacts with the capsid via the large tegument protein/LTP and participates in its transport to the host trans-Golgi network (TGN) where secondary envelopment occurs. Modulates tegumentation and capsid accumulation at the viral assembly complex. The polypeptide is Inner tegument protein (U30) (Homo sapiens (Human)).